The sequence spans 149 residues: Large ribosomal subunit protein uL22c (149 aa).

The protein belongs to the universal ribosomal protein uL22 family. As to quaternary structure, part of the 50S ribosomal subunit.

The protein localises to the plastid. The protein resides in the chloroplast. In terms of biological role, this protein binds specifically to 23S rRNA. Functionally, the globular domain of the protein is located near the polypeptide exit tunnel on the outside of the subunit, while an extended beta-hairpin is found that lines the wall of the exit tunnel in the center of the 70S ribosome. The polypeptide is Large ribosomal subunit protein uL22c (rpl22) (Hordeum vulgare (Barley)).